Reading from the N-terminus, the 474-residue chain is E3 ubiquitin-protein ligase CBL-C (474 aa).

Positions 7 to 145 (PWGRQWEEAR…HALFPGGKYC (139 aa)) are 4H. Residues 7–321 (PWGRQWEEAR…GKTHNPDLTE (315 aa)) enclose the Cbl-PTB domain. Residues 146–218 (GHMYQLTKAP…FEFDVFTRLF (73 aa)) form an EF-hand-like region. Ca(2+) contacts are provided by D199, T201, and E210. The segment at 219–321 (QPWPTLLKNW…GKTHNPDLTE (103 aa)) is SH2-like. R264 is a 4-O-phospho-L-tyrosine binding site. Residues 322–350 (LGQAEPQQRIHVSEEQLQLYWAMDSTFEL) form a linker region. Y341 is subject to Phosphotyrosine; by SRC. The segment at 351–390 (CKICAESNKDVKIEPCGHLLCSCCLAAWQHSDSQTCPFCR) adopts an RING-type zinc-finger fold. Positions 351-474 (CKICAESNKD…ALGPQDPAPA (124 aa)) are interaction with RET. The tract at residues 409–474 (TAEDSGNSSD…ALGPQDPAPA (66 aa)) is disordered. The span at 432-441 (SAPPLPPRPD) shows a compositional bias: pro residues.

In terms of assembly, interacts with ubiquitin-conjugating enzyme E2 UBE2D2 and UBE2D3. Isoform 1 interacts with EGFR (tyrosine phosphorylated). Interacts with the SH3 domain proteins LYN and CRK. Interacts (via RING-type zinc finger) with TGFB1I1 (via LIM zinc-binding domain 2); the interaction is direct and enhances the E3 activity. Interacts directly with RET (inactive) and CD2AP; dissociates from RET upon RET activation by GDNF which also increases the interaction with CD2AP suggesting dissociation as CBLC:CD2AP complex. Interacts with SRC; the interaction is enhanced when SRC is phosphorylated at 'Tyr-419'. Phosphorylated on multiple tyrosine residues by SRC. Isoform 1, but not isoform 2, is phosphorylated on tyrosines by EGFR. In terms of processing, autoubiquitinated when phosphorylated at Tyr-341, enhanced by SRC; suggesting proteasomal degradation. Ubiquitous.

It catalyses the reaction S-ubiquitinyl-[E2 ubiquitin-conjugating enzyme]-L-cysteine + [acceptor protein]-L-lysine = [E2 ubiquitin-conjugating enzyme]-L-cysteine + N(6)-ubiquitinyl-[acceptor protein]-L-lysine.. With respect to regulation, phosphorylation at Tyr-341 is necessary and sufficient for the activation of E3 activity. Acts as an E3 ubiquitin-protein ligase, which accepts ubiquitin from specific E2 ubiquitin-conjugating enzymes, and then transfers it to substrates promoting their degradation by the proteasome. Functionally coupled with the E2 ubiquitin-protein ligases UB2D1, UB2D2 and UB2D3. Regulator of EGFR mediated signal transduction; upon EGF activation, ubiquitinates EGFR. Isoform 1, but not isoform 2, inhibits EGF stimulated MAPK1 activation. Promotes ubiquitination of SRC phosphorylated at 'Tyr-419'. In collaboration with CD2AP may act as regulatory checkpoint for Ret signaling by modulating the rate of RET degradation after ligand activation; CD2AP converts it from an inhibitor to a promoter of RET degradation; the function limits the potency of GDNF on neuronal survival. The polypeptide is E3 ubiquitin-protein ligase CBL-C (CBLC) (Homo sapiens (Human)).